The following is a 324-amino-acid chain: Quinolinate synthase 2 (324 aa).

Residues histidine 48 and serine 66 each coordinate iminosuccinate. A [4Fe-4S] cluster-binding site is contributed by cysteine 111. Residues 137 to 139 (YVN) and serine 154 contribute to the iminosuccinate site. Cysteine 196 is a [4Fe-4S] cluster binding site. Iminosuccinate contacts are provided by residues 222-224 (HPE) and threonine 239. Position 282 (cysteine 282) interacts with [4Fe-4S] cluster.

This sequence belongs to the quinolinate synthase family. Type 2 subfamily. Requires [4Fe-4S] cluster as cofactor.

It localises to the cytoplasm. It carries out the reaction iminosuccinate + dihydroxyacetone phosphate = quinolinate + phosphate + 2 H2O + H(+). It participates in cofactor biosynthesis; NAD(+) biosynthesis; quinolinate from iminoaspartate: step 1/1. Functionally, catalyzes the condensation of iminoaspartate with dihydroxyacetone phosphate to form quinolinate. This is Quinolinate synthase 2 from Mesorhizobium japonicum (strain LMG 29417 / CECT 9101 / MAFF 303099) (Mesorhizobium loti (strain MAFF 303099)).